A 211-amino-acid polypeptide reads, in one-letter code: ATP-dependent dethiobiotin synthetase BioD 2 (211 aa).

Residue 13 to 18 (DIGKTI) coordinates ATP. Threonine 17 serves as a coordination point for Mg(2+). Lysine 38 is an active-site residue. Threonine 42 contributes to the substrate binding site. Residues aspartate 50, 115–118 (EGAG), and 175–176 (NT) contribute to the ATP site. Residues aspartate 50 and glutamate 115 each coordinate Mg(2+).

Belongs to the dethiobiotin synthetase family. As to quaternary structure, homodimer. Mg(2+) is required as a cofactor.

It is found in the cytoplasm. The enzyme catalyses (7R,8S)-7,8-diammoniononanoate + CO2 + ATP = (4R,5S)-dethiobiotin + ADP + phosphate + 3 H(+). It functions in the pathway cofactor biosynthesis; biotin biosynthesis; biotin from 7,8-diaminononanoate: step 1/2. Its function is as follows. Catalyzes a mechanistically unusual reaction, the ATP-dependent insertion of CO2 between the N7 and N8 nitrogen atoms of 7,8-diaminopelargonic acid (DAPA, also called 7,8-diammoniononanoate) to form a ureido ring. The polypeptide is ATP-dependent dethiobiotin synthetase BioD 2 (Haemophilus ducreyi (strain 35000HP / ATCC 700724)).